The following is a 376-amino-acid chain: MKIHEYQAKEIFSKYGIPVERHTLCRTAAGAVAAYKRMGSDRVVIKAQVLTGGRGKAGGVKLVDNTEDTYQEAKNILGMSIKGLPVNQILVSEAVDIAAEYYVSFTIDRNTRSVILMMSASGGMDIEEVARQSPEKIIRYAIDPFIGLPDYLARRFAFSLFPHIEQAGRMAAILQALYKIFMENDASLVEVNPLALTAKGILMAIDAKIVFDDNALYRHPDVLSLFDPTEEEKVEADAKNKGFSYVHMDGNIGCMVNGAGLAMATMDMIKLHGGNPANFLDIGGSSNPVKVVEAMKLLLQDEKVKVVLINIFGGITRCDDVAIGLIQAFDQIKSDIPVIVRLTGTNEHLGRDLLRNHSRFQIATTMQEAALMAIKS.

Residues 9–237 form the ATP-grasp domain; that stretch reads KEIFSKYGIP…PTEEEKVEAD (229 aa). ATP-binding positions include Lys-46, 53–55, Val-95, and Glu-100; that span reads GRG. Mg(2+)-binding residues include Asn-192 and Asp-206. Residues Asn-257 and 314 to 316 contribute to the substrate site; that span reads GIT.

It belongs to the succinate/malate CoA ligase beta subunit family. In terms of assembly, heterotetramer of two alpha and two beta subunits. Requires Mg(2+) as cofactor.

The enzyme catalyses succinate + ATP + CoA = succinyl-CoA + ADP + phosphate. It carries out the reaction GTP + succinate + CoA = succinyl-CoA + GDP + phosphate. It participates in carbohydrate metabolism; tricarboxylic acid cycle; succinate from succinyl-CoA (ligase route): step 1/1. Succinyl-CoA synthetase functions in the citric acid cycle (TCA), coupling the hydrolysis of succinyl-CoA to the synthesis of either ATP or GTP and thus represents the only step of substrate-level phosphorylation in the TCA. The beta subunit provides nucleotide specificity of the enzyme and binds the substrate succinate, while the binding sites for coenzyme A and phosphate are found in the alpha subunit. The polypeptide is Succinate--CoA ligase [ADP-forming] subunit beta (Bacteroides thetaiotaomicron (strain ATCC 29148 / DSM 2079 / JCM 5827 / CCUG 10774 / NCTC 10582 / VPI-5482 / E50)).